Consider the following 396-residue polypeptide: G-protein coupled receptor 84 (396 aa).

The Extracellular segment spans residues M1–W26. N-linked (GlcNAc...) asparagine glycans are attached at residues N3 and N8. The helical transmembrane segment at G27–I47 threads the bilayer. Residues Q48–L57 are Cytoplasmic-facing. Residues L58–V78 traverse the membrane as a helical segment. Residues D79–R94 are Extracellular-facing. Residues V95–A115 form a helical membrane-spanning segment. The Cytoplasmic portion of the chain corresponds to L116 to T144. Residues W145 to V165 traverse the membrane as a helical segment. The Extracellular portion of the chain corresponds to C166 to T180. Residues I181 to I201 form a helical membrane-spanning segment. Topologically, residues H202–M320 are cytoplasmic. Phosphoserine is present on residues S221 and S224. The disordered stretch occupies residues R244–S311. The span at S247 to S260 shows a compositional bias: low complexity. A phosphothreonine mark is found at T263 and T264. The chain crosses the membrane as a helical span at residues C321 to L341. At D342–H352 the chain is on the extracellular side. Residues M353–M373 traverse the membrane as a helical segment. Residues N374–H396 are Cytoplasmic-facing.

Belongs to the G-protein coupled receptor 1 family. As to quaternary structure, interacts with ARRB2 and ARR3. Phosphorylated by a subset of GPR84-activating ligands. Constitutively phosphorylated at Ser-221 and Ser-224 in the absence of 2-HTP. By contrast, Thr-263 and Thr-264 are phosphorylated only following prior cell treatment with 2-HTP. As to expression, expressed predominantly in hematopoietic tissues. High levels detected in the bone marrow and lower levels in the peripheral leukocytes and lung. Also expressed in brain, heart, muscle, colon, thymus, spleen, kidney, liver, placenta and intestine. Within the leukocyte population expression is higher in neutrophils and eosinophils relative to T- or B-lymphocytes.

It is found in the cell membrane. In terms of biological role, g protein-coupled receptor that responds endogenously to dietary fatty acids or nutrient, specifically medium-chain free fatty acid (FFA) with carbon chain lengths of C9 to C14. Capric acid (C10:0), undecanoic acid (C11:0) and lauric acid (C12:0) are the most potent agonists. In immune cells, functions as a pro-inflammatory receptor via 6-OAU and promotes the expression of pro-inflammatory mediators such as TNFalpha, IL-6 and IL-12B as well as stimulating chemotactic responses through activation of signaling mediators AKT, ERK and NF-kappa-B. In addition, triggers increased bacterial adhesion and phagocytosis in macrophages and regulates pro-inflammatory function via enhancing NLRP3 inflammasome activation. Also plays an important role in inflammation by modulating neutrophil functions. Mechanistically, promotes neutrophil chemotaxis, reactive oxygen species (ROS) production and degranulation via LYN-AKT/ERK pathway. To regulate ROS, communicates with the two formyl peptide receptors FPR2 and FPR1 to control the NADPH oxidase activity in neutrophils. The protein is G-protein coupled receptor 84 (GPR84) of Homo sapiens (Human).